A 236-amino-acid chain; its full sequence is MPISVDKAVIARLKIQGETFEILVDPYLARDFKEGKNVPIEEILATPYVFKDAHKGDKASEKEMEKIFGTSDPYEVAKIILKKGEVQLTAQQRREMLEEKKRQIATIIHKHAVDPRTGYPHPVDRILRAMEEVGVRVDIFKDAEAQVQDVIKALRRVLPLRIEMKVIAVKIPGEYVGRSYGEVRKFGRIKKEEWGSDGSWMFLIEIPGGVEEEFYEKLNALTKGNAQTKLIERKGL.

Belongs to the SDO1/SBDS family.

The protein is Ribosome maturation protein SDO1 homolog of Pyrococcus horikoshii (strain ATCC 700860 / DSM 12428 / JCM 9974 / NBRC 100139 / OT-3).